Reading from the N-terminus, the 941-residue chain is Ankyrin repeat and MYND domain-containing protein 1 (941 aa).

MORN repeat units lie at residues 2-24, 25-47, and 70-92; these read YQGE…TGES, YHGQ…DGSS, and FQGL…DGSQ. 7 ANK repeats span residues 292 to 321, 513 to 542, 545 to 574, 581 to 613, 657 to 691, 694 to 723, and 737 to 766; these read KGYT…DVNK, MRRM…DPNL, VPMQ…RTDI, STLT…DVDA, GGRT…NPNL, SGHS…DPNL, and CDLT…DILK. Cys-880, Cys-883, Cys-894, Cys-897, Cys-903, Cys-907, His-916, and Cys-920 together coordinate Zn(2+). The segment at 880-920 adopts an MYND-type zinc-finger fold; sequence CYQCGRSIGVRLLPCPRCYGILTCSKYCKTKAWTEFHKKDC.

This chain is Ankyrin repeat and MYND domain-containing protein 1 (ANKMY1), found in Homo sapiens (Human).